Consider the following 106-residue polypeptide: Gibberellin-regulated protein 4 (106 aa).

The first 25 residues, 1–25 (MAKSYGAIFLLTLIVLFMLQTMVMA), serve as a signal peptide directing secretion.

The protein belongs to the GASA family. Post-translationally, six disulfide bonds may be present. Expressed in flower buds, style, stamen filaments, vasculature of petals, root phloem, vasculature of cotyledons and rosette leaves and developing embryo.

It localises to the secreted. Its function is as follows. Gibberellin-regulated protein involved in the regulation of floral meristem and floral organ identity, and promotion of seed size and weight. May play a role in the promotion of gibberellin responses such as regulation of flowering under short-day conditions, seed germination and inhibition of gibberellin oxidase. Possesses redox activity in E.coli and may function in redox regulation in planta. The chain is Gibberellin-regulated protein 4 (GASA4) from Arabidopsis thaliana (Mouse-ear cress).